We begin with the raw amino-acid sequence, 152 residues long: MAKMHTKRKGKSSSTRPIRTDPPEWCKIGADEVTTIVLDLWKQGVSTAEIGMVLRDRYGVPDAKLITGKKVTTILKENNVAPNIPEDLTNLIVKALGLRKHLSVNKKDVHNKRSLNLTESKIRRLVKYYKQEKVLPRDWFYKPETAEMMITR.

The segment covering 1–11 has biased composition (basic residues); sequence MAKMHTKRKGK. Positions 1–23 are disordered; that stretch reads MAKMHTKRKGKSSSTRPIRTDPP.

Belongs to the universal ribosomal protein uS15 family. As to quaternary structure, part of the 30S ribosomal subunit.

The protein is Small ribosomal subunit protein uS15 of Methanosarcina acetivorans (strain ATCC 35395 / DSM 2834 / JCM 12185 / C2A).